The primary structure comprises 123 residues: MPTINQLIRKPRQPVAARNKVPAMEACPQKRGVCTRVYTTTPKKPNSALRKVARVRLTNGFEVTSYIPGEGHNLQEHSVVMIRGGRVKDLPGVRYHIIRGTLDTQGVKDRRQRRSKYGAKRPK.

Aspartate 89 carries the post-translational modification 3-methylthioaspartic acid. The disordered stretch occupies residues 101 to 123 (TLDTQGVKDRRQRRSKYGAKRPK). The span at 110-123 (RRQRRSKYGAKRPK) shows a compositional bias: basic residues.

It belongs to the universal ribosomal protein uS12 family. As to quaternary structure, part of the 30S ribosomal subunit. Contacts proteins S8 and S17. May interact with IF1 in the 30S initiation complex.

Its function is as follows. With S4 and S5 plays an important role in translational accuracy. Functionally, interacts with and stabilizes bases of the 16S rRNA that are involved in tRNA selection in the A site and with the mRNA backbone. Located at the interface of the 30S and 50S subunits, it traverses the body of the 30S subunit contacting proteins on the other side and probably holding the rRNA structure together. The combined cluster of proteins S8, S12 and S17 appears to hold together the shoulder and platform of the 30S subunit. In Paramagnetospirillum magneticum (strain ATCC 700264 / AMB-1) (Magnetospirillum magneticum), this protein is Small ribosomal subunit protein uS12.